The primary structure comprises 462 residues: Chromosomal replication initiator protein DnaA (462 aa).

The tract at residues 1 to 83 is domain I, interacts with DnaA modulators; the sequence is MSLSLWQQCL…LRFEVGSKPA (83 aa). Positions 83–125 are domain II; that stretch reads AARAHNNPVTASVSAPVAPVTRSAPMRPSWDNSPAQPELSYRS. The segment at 104–125 is disordered; sequence RSAPMRPSWDNSPAQPELSYRS. Residues 112-125 show a composition bias toward polar residues; it reads WDNSPAQPELSYRS. The segment at 126–342 is domain III, AAA+ region; it reads NVNPKHTFDN…GALNRVIANA (217 aa). Positions 170, 172, 173, and 174 each coordinate ATP. The interval 343-462 is domain IV, binds dsDNA; sequence NFTGRAITID…FSNLIRTLSS (120 aa).

Belongs to the DnaA family. In terms of assembly, oligomerizes as a right-handed, spiral filament on DNA at oriC.

Its subcellular location is the cytoplasm. Functionally, plays an essential role in the initiation and regulation of chromosomal replication. ATP-DnaA binds to the origin of replication (oriC) to initiate formation of the DNA replication initiation complex once per cell cycle. Binds the DnaA box (a 9 base pair repeat at the origin) and separates the double-stranded (ds)DNA. Forms a right-handed helical filament on oriC DNA; dsDNA binds to the exterior of the filament while single-stranded (ss)DNA is stabiized in the filament's interior. The ATP-DnaA-oriC complex binds and stabilizes one strand of the AT-rich DNA unwinding element (DUE), permitting loading of DNA polymerase. After initiation quickly degrades to an ADP-DnaA complex that is not apt for DNA replication. Binds acidic phospholipids. This is Chromosomal replication initiator protein DnaA from Yersinia pseudotuberculosis serotype O:1b (strain IP 31758).